A 275-amino-acid chain; its full sequence is Nitrogenase iron protein 1 (275 aa).

Residue 9–16 participates in ATP binding; sequence GKGGIGKS. A [4Fe-4S] cluster-binding site is contributed by Cys-97. Position 100 is an ADP-ribosylarginine; by dinitrogenase reductase ADP-ribosyltransferase (Arg-100). [4Fe-4S] cluster is bound at residue Cys-132.

This sequence belongs to the NifH/BchL/ChlL family. As to quaternary structure, homodimer. [4Fe-4S] cluster serves as cofactor. In terms of processing, the reversible ADP-ribosylation of Arg-100 inactivates the nitrogenase reductase and regulates nitrogenase activity.

It catalyses the reaction N2 + 8 reduced [2Fe-2S]-[ferredoxin] + 16 ATP + 16 H2O = H2 + 8 oxidized [2Fe-2S]-[ferredoxin] + 2 NH4(+) + 16 ADP + 16 phosphate + 6 H(+). In terms of biological role, the key enzymatic reactions in nitrogen fixation are catalyzed by the nitrogenase complex, which has 2 components: the iron protein and the molybdenum-iron protein. The polypeptide is Nitrogenase iron protein 1 (nifH1) (Methanothermobacter thermautotrophicus (strain ATCC 29096 / DSM 1053 / JCM 10044 / NBRC 100330 / Delta H) (Methanobacterium thermoautotrophicum)).